Consider the following 495-residue polypeptide: Cysteine--tRNA ligase (495 aa).

Cys35 lines the Zn(2+) pocket. Positions 37-47 (PTVYSNVHLGN) match the 'HIGH' region motif. Zn(2+)-binding residues include Cys230, His255, and Glu259. The 'KMSKS' region signature appears at 287–291 (KMSKS). Lys290 is a binding site for ATP.

It belongs to the class-I aminoacyl-tRNA synthetase family. In terms of assembly, monomer. Zn(2+) serves as cofactor.

It is found in the cytoplasm. The catalysed reaction is tRNA(Cys) + L-cysteine + ATP = L-cysteinyl-tRNA(Cys) + AMP + diphosphate. This chain is Cysteine--tRNA ligase, found in Flavobacterium psychrophilum (strain ATCC 49511 / DSM 21280 / CIP 103535 / JIP02/86).